The chain runs to 115 residues: MKYLIVCVTLALFAYINASPAYGNRGGYGGGYGGGYGPVQRVVYEEVPAYGPSRGYNSYPRSLRSEGNGGSAAAAAAASAAAVNPGTYKQYAIPSYELDGARGYEIGHGYGQRAY.

Residues 1–18 (MKYLIVCVTLALFAYINA) form the signal peptide.

This sequence belongs to the chorion protein S15/S18 family.

Its subcellular location is the secreted. Chorion membrane (egg shell) protein; plays a role in protecting the egg from the environment. The protein is Chorion protein S15 (Cp15) of Drosophila melanogaster (Fruit fly).